Consider the following 521-residue polypeptide: UPF0053 protein BU323 (521 aa).

7 helical membrane-spanning segments follow: residues 13–33 (LLTLVILEVVLGIDNLIFVAI), 49–69 (IGLGLALVMRLALLSLISWIV), 80–100 (FFSLSIRDIILLFGGFFLLFK), 125–145 (FWAVVIQIVVLDAVFSLDAII), 150–170 (MVNQLLIMMIAVILATFLMLL), 185–205 (VVVLCLSFLLMIGFSLVTEAL), and 207–227 (FCIPKGYLYAAIGFSILIEIF). 2 CBS domains span residues 311–370 (MTPR…KIDA) and 374–434 (SSKI…DADE).

The protein belongs to the UPF0053 family.

The protein localises to the cell membrane. The chain is UPF0053 protein BU323 from Buchnera aphidicola subsp. Acyrthosiphon pisum (strain APS) (Acyrthosiphon pisum symbiotic bacterium).